We begin with the raw amino-acid sequence, 294 residues long: UPF0761 membrane protein YPN_0254 (294 aa).

A run of 7 helical transmembrane segments spans residues leucine 44 to phenylalanine 64, isoleucine 67 to isoleucine 87, glycine 108 to tryptophan 128, leucine 136 to alanine 156, valine 185 to valine 205, alanine 212 to methionine 232, and valine 246 to leucine 266.

Belongs to the UPF0761 family.

Its subcellular location is the cell inner membrane. The polypeptide is UPF0761 membrane protein YPN_0254 (Yersinia pestis bv. Antiqua (strain Nepal516)).